A 427-amino-acid polypeptide reads, in one-letter code: ATP synthase subunit beta (427 aa).

160–167 lines the ATP pocket; sequence GGAGVGKT.

The protein belongs to the ATPase alpha/beta chains family. In terms of assembly, F-type ATPases have 2 components, CF(1) - the catalytic core - and CF(0) - the membrane proton channel. CF(1) has five subunits: alpha(3), beta(3), gamma(1), delta(1), epsilon(1). CF(0) has three main subunits: a(1), b(2) and c(9-12). The alpha and beta chains form an alternating ring which encloses part of the gamma chain. CF(1) is attached to CF(0) by a central stalk formed by the gamma and epsilon chains, while a peripheral stalk is formed by the delta and b chains.

The protein localises to the cell membrane. The catalysed reaction is ATP + H2O + 4 H(+)(in) = ADP + phosphate + 5 H(+)(out). Its function is as follows. Produces ATP from ADP in the presence of a proton gradient across the membrane. The catalytic sites are hosted primarily by the beta subunits. This Peptococcus niger protein is ATP synthase subunit beta.